Consider the following 126-residue polypeptide: Small ribosomal subunit protein uS13 (126 aa).

A disordered region spans residues 91–126; sequence HRAGLPVRGQRTRTNSRTRRSAKRTVAGKKKAPSKK. Basic residues predominate over residues 100–126; that stretch reads QRTRTNSRTRRSAKRTVAGKKKAPSKK.

Belongs to the universal ribosomal protein uS13 family. In terms of assembly, part of the 30S ribosomal subunit. Forms a loose heterodimer with protein S19. Forms two bridges to the 50S subunit in the 70S ribosome.

Its function is as follows. Located at the top of the head of the 30S subunit, it contacts several helices of the 16S rRNA. In the 70S ribosome it contacts the 23S rRNA (bridge B1a) and protein L5 of the 50S subunit (bridge B1b), connecting the 2 subunits; these bridges are implicated in subunit movement. Contacts the tRNAs in the A and P-sites. The sequence is that of Small ribosomal subunit protein uS13 from Acaryochloris marina (strain MBIC 11017).